A 253-amino-acid polypeptide reads, in one-letter code: Ribosomal RNA small subunit methyltransferase J (253 aa).

Residues 98 to 99 (RD), 114 to 115 (ER), 150 to 151 (SS), and Asp172 contribute to the S-adenosyl-L-methionine site.

It belongs to the methyltransferase superfamily. RsmJ family.

The protein resides in the cytoplasm. The catalysed reaction is guanosine(1516) in 16S rRNA + S-adenosyl-L-methionine = N(2)-methylguanosine(1516) in 16S rRNA + S-adenosyl-L-homocysteine + H(+). Functionally, specifically methylates the guanosine in position 1516 of 16S rRNA. This is Ribosomal RNA small subunit methyltransferase J from Shewanella pealeana (strain ATCC 700345 / ANG-SQ1).